We begin with the raw amino-acid sequence, 171 residues long: Nicotinamide-nucleotide adenylyltransferase (171 aa).

This sequence belongs to the archaeal NMN adenylyltransferase family.

The protein resides in the cytoplasm. It catalyses the reaction beta-nicotinamide D-ribonucleotide + ATP + H(+) = diphosphate + NAD(+). Its pathway is cofactor biosynthesis; NAD(+) biosynthesis; NAD(+) from nicotinamide D-ribonucleotide: step 1/1. This chain is Nicotinamide-nucleotide adenylyltransferase, found in Ignicoccus hospitalis (strain KIN4/I / DSM 18386 / JCM 14125).